We begin with the raw amino-acid sequence, 3342 residues long: Large tegument protein deneddylase (3342 aa).

The deubiquitination activity stretch occupies residues 1 to 302 (MTDSTDSRQA…SRIYGTSDIV (302 aa)). The 221-residue stretch at 78–298 (VAVGIRNQFA…ISTVSRIYGT (221 aa)) folds into the Peptidase C76 domain. Active-site residues include Cys-98, Asp-232, and His-234. The interval 472 to 554 (RRPLWTPQSS…SPTTSNRGED (83 aa)) is disordered. The span at 480–494 (SSSENISLDGSSSSL) shows a compositional bias: low complexity. Over residues 514–526 (VTSTESSDVTENV) the composition is skewed to polar residues. Positions 630-656 (LYVCMMDIFARLFNYIIENGARTTSDR) are interaction with inner tegument protein. 3 disordered regions span residues 2584-2603 (DGDADISSNRIDSEDDTYAD), 2654-2987 (PQIG…SRKH), and 3196-3279 (PKHD…SSTS). 5 stretches are compositionally biased toward pro residues: residues 2701–2743 (TPAP…PKPK), 2751–2777 (KPSPAPKPSPASKPTPAPKPSPAPKPK), 2785–2799 (KPTPAPKPSPASKPK), 2823–2837 (KPSPAPKPSPAPKPK), and 2845–2897 (KPTP…PKPK). Polar residues predominate over residues 2911 to 2947 (NSDSKTSPVPNPNTFSASKIPPTSSIAEETKPCQSNL). Low complexity predominate over residues 3264-3279 (HVSGSTDTTTDGSSTS).

This sequence belongs to the herpesviridae large tegument protein family. In terms of assembly, interacts with host CUL1 and CUL4A; these interactions inhibit the E3 ligase activity of cullins. Interacts with inner tegument protein. Interacts with capsid vertex specific component CVC2. Interacts with the major capsid protein/MCP.

It localises to the virion tegument. It is found in the host cytoplasm. Its subcellular location is the host nucleus. It carries out the reaction Thiol-dependent hydrolysis of ester, thioester, amide, peptide and isopeptide bonds formed by the C-terminal Gly of ubiquitin (a 76-residue protein attached to proteins as an intracellular targeting signal).. Its function is as follows. Large tegument protein that plays multiple roles in the viral cycle. During viral entry, remains associated with the capsid while most of the tegument is detached and participates in the capsid transport toward the host nucleus. Plays a role in the routing of the capsid at the nuclear pore complex and subsequent uncoating. Within the host nucleus, acts as a deneddylase and promotes the degradation of nuclear CRLs (cullin-RING ubiquitin ligases) and thereby stabilizes nuclear CRL substrates, while cytoplasmic CRLs remain unaffected. These modifications prevent host cell cycle S-phase progression and create a favorable environment allowing efficient viral genome replication. Participates later in the secondary envelopment of capsids. Indeed, plays a linker role for the association of the outer viral tegument to the capsids together with the inner tegument protein. This Gallus gallus (Chicken) protein is Large tegument protein deneddylase (MDV049).